A 249-amino-acid chain; its full sequence is Enolase-phosphatase E1 (249 aa).

Mg(2+) is bound by residues aspartate 9 and glutamate 11. Substrate contacts are provided by residues 137–138 (SS) and lysine 177. Residue aspartate 204 coordinates Mg(2+).

The protein belongs to the HAD-like hydrolase superfamily. MasA/MtnC family. As to quaternary structure, monomer. Mg(2+) is required as a cofactor.

The protein resides in the cytoplasm. Its subcellular location is the nucleus. It carries out the reaction 5-methylsulfanyl-2,3-dioxopentyl phosphate + H2O = 1,2-dihydroxy-5-(methylsulfanyl)pent-1-en-3-one + phosphate. The protein operates within amino-acid biosynthesis; L-methionine biosynthesis via salvage pathway; L-methionine from S-methyl-5-thio-alpha-D-ribose 1-phosphate: step 3/6. It participates in amino-acid biosynthesis; L-methionine biosynthesis via salvage pathway; L-methionine from S-methyl-5-thio-alpha-D-ribose 1-phosphate: step 4/6. Its function is as follows. Bifunctional enzyme that catalyzes the enolization of 2,3-diketo-5-methylthiopentyl-1-phosphate (DK-MTP-1-P) into the intermediate 2-hydroxy-3-keto-5-methylthiopentenyl-1-phosphate (HK-MTPenyl-1-P), which is then dephosphorylated to form the acireductone 1,2-dihydroxy-3-keto-5-methylthiopentene (DHK-MTPene). This is Enolase-phosphatase E1 from Lodderomyces elongisporus (strain ATCC 11503 / CBS 2605 / JCM 1781 / NBRC 1676 / NRRL YB-4239) (Yeast).